A 1287-amino-acid chain; its full sequence is Rho GTPase-activating protein 33 (1287 aa).

The segment at 1-40 (MVARSTDSLDGPGEGSVQPLPTAGGPSVKGKPGKRLSAPR) is disordered. At serine 8 the chain carries Phosphoserine. The PX; atypical domain maps to 59-168 (FGHIQLLLSP…CGPVLTWMEL (110 aa)). The SH3 domain maps to 186-248 (PAVAAAHVIK…PSECVELFTE (63 aa)). Positions 315-510 (CDLGEHLSNS…FLLTHVDVLF (196 aa)) constitute a Rho-GAP domain. Disordered regions lie at residues 551–792 (RTQG…SPAA), 813–832 (AGGA…GRSL), 859–1030 (KLRG…VPTP), 1056–1075 (GPPS…SLGP), 1090–1134 (GASE…SPDF), and 1146–1287 (PPDH…RSYC). A compositionally biased stretch (low complexity) spans 558–571 (TPTEPTTPKAPASP). Serine 570 bears the Phosphoserine mark. The span at 572–584 (AERRKGERGEKQR) shows a compositional bias: basic and acidic residues. The span at 622 to 645 (SGSRPDTVTLRSAKSEESLSSQAS) shows a compositional bias: polar residues. Serine 636 carries the phosphoserine modification. Residues 672-709 (AGSCESLSSSSSSESSSSESSSSSSESSAAGLGALSGS) are compositionally biased toward low complexity. Phosphoserine is present on serine 727. Over residues 752-766 (PGDPAPPASPAPPAP) the composition is skewed to pro residues. 2 stretches are compositionally biased toward low complexity: residues 813–829 (AGGA…LSPG) and 896–919 (PARL…SQQE). Composition is skewed to polar residues over residues 972–981 (RQQSDGSLLR) and 1019–1028 (SPCSVPSQVP). Residue tyrosine 1169 is modified to Phosphotyrosine. Residues 1175–1189 (GPRGPSPASSSSSSP) are compositionally biased toward low complexity. An Omega-N-methylarginine modification is found at arginine 1244. Positions 1274-1287 (SWSLHSEGQTRSYC) are enriched in polar residues.

This sequence belongs to the PX domain-containing GAP family. Specifically interacts with CDC42 and RHOQ/TC10 through its Rho-GAP domain. Interacts with NEK6.

Functionally, may be involved in several stages of intracellular trafficking. Could play an important role in the regulation of glucose transport by insulin. May act as a downstream effector of RHOQ/TC10 in the regulation of insulin-stimulated glucose transport. This chain is Rho GTPase-activating protein 33 (ARHGAP33), found in Homo sapiens (Human).